The primary structure comprises 146 residues: Hemoglobin subunit beta-1 (146 aa).

One can recognise a Globin domain in the interval 2–146 (KWTDKERAVI…VVSALGKQYC (145 aa)). Heme b contacts are provided by H63 and H92.

This sequence belongs to the globin family. Heterotetramer of two alpha chains and two beta chains. As to expression, red blood cells.

Involved in oxygen transport from gills to the various peripheral tissues. This Lycodes reticulatus (Arctic eelpout) protein is Hemoglobin subunit beta-1.